The primary structure comprises 164 residues: Putative F-box protein At1g59675 (164 aa).

The 48-residue stretch at 9–56 folds into the F-box domain; the sequence is SQSDHVPLDLTIEILSRLPAKSVGRFRSVSKLWSANTTSQNFINSFAT.

The protein is Putative F-box protein At1g59675 of Arabidopsis thaliana (Mouse-ear cress).